Here is a 353-residue protein sequence, read N- to C-terminus: tRNA U34 carboxymethyltransferase (353 aa).

Residues lysine 101, tryptophan 119, lysine 124, glycine 144, aspartate 166–serine 168, leucine 207–glutamate 208, methionine 227, tyrosine 231, and arginine 346 each bind carboxy-S-adenosyl-L-methionine.

It belongs to the class I-like SAM-binding methyltransferase superfamily. CmoB family. Homotetramer.

The enzyme catalyses carboxy-S-adenosyl-L-methionine + 5-hydroxyuridine(34) in tRNA = 5-carboxymethoxyuridine(34) in tRNA + S-adenosyl-L-homocysteine + H(+). In terms of biological role, catalyzes carboxymethyl transfer from carboxy-S-adenosyl-L-methionine (Cx-SAM) to 5-hydroxyuridine (ho5U) to form 5-carboxymethoxyuridine (cmo5U) at position 34 in tRNAs. The sequence is that of tRNA U34 carboxymethyltransferase from Psychrobacter sp. (strain PRwf-1).